We begin with the raw amino-acid sequence, 493 residues long: Glutamyl-tRNA(Gln) amidotransferase subunit A (493 aa).

Active-site charge relay system residues include K78 and S158. S182 functions as the Acyl-ester intermediate in the catalytic mechanism.

The protein belongs to the amidase family. GatA subfamily. As to quaternary structure, heterotrimer of A, B and C subunits.

The enzyme catalyses L-glutamyl-tRNA(Gln) + L-glutamine + ATP + H2O = L-glutaminyl-tRNA(Gln) + L-glutamate + ADP + phosphate + H(+). Allows the formation of correctly charged Gln-tRNA(Gln) through the transamidation of misacylated Glu-tRNA(Gln) in organisms which lack glutaminyl-tRNA synthetase. The reaction takes place in the presence of glutamine and ATP through an activated gamma-phospho-Glu-tRNA(Gln). The polypeptide is Glutamyl-tRNA(Gln) amidotransferase subunit A (Beijerinckia indica subsp. indica (strain ATCC 9039 / DSM 1715 / NCIMB 8712)).